The chain runs to 118 residues: Large ribosomal subunit protein bL19 (118 aa).

It belongs to the bacterial ribosomal protein bL19 family.

Functionally, this protein is located at the 30S-50S ribosomal subunit interface and may play a role in the structure and function of the aminoacyl-tRNA binding site. The chain is Large ribosomal subunit protein bL19 (rplS) from Serratia marcescens.